The primary structure comprises 63 residues: DNA-directed RNA polymerase 7 kDa subunit (63 aa).

Belongs to the poxviridae DNA-directed RNA polymerase 7 kDa subunit family. As to quaternary structure, the DNA-dependent RNA polymerase used for intermediate and late genes expression consists of eight subunits 147 kDa, 133 kDa, 35 kDa, 30 kDa, 22 kDa, 19 kDa, 18 kDa and 7 kDa totalling more than 500 kDa in mass. The same holoenzyme, with the addition of the transcription-specificity factor RAP94, is used for early gene expression.

Its subcellular location is the virion. The enzyme catalyses RNA(n) + a ribonucleoside 5'-triphosphate = RNA(n+1) + diphosphate. Functionally, part of the DNA-dependent RNA polymerase which catalyzes the transcription of viral DNA into RNA using the four ribonucleoside triphosphates as substrates. Responsible for the transcription of early, intermediate and late genes. DNA-dependent RNA polymerase associates with the early transcription factor (ETF) thereby allowing the early genes transcription. Late transcription, and probably also intermediate transcription, require newly synthesized RNA polymerase. In Rabbit fibroma virus (strain Kasza) (RFV), this protein is DNA-directed RNA polymerase 7 kDa subunit (RPO7).